Here is a 1610-residue protein sequence, read N- to C-terminus: NHS-like protein 1 (1610 aa).

Serine 24 is modified (phosphoserine). The tract at residues 145-169 (SPFCDDYQDEDEETDQKCSLSSSEE) is disordered. Serine 198 and serine 328 each carry phosphoserine. The segment covering 433-448 (TAQSAGQRESKSSGSS) has biased composition (polar residues). 2 disordered regions span residues 433–477 (TAQS…HWNE) and 531–602 (PAHP…DAGS). A Phosphoserine modification is found at serine 568. A compositionally biased stretch (polar residues) spans 578 to 594 (GYSTPTSNMSSCSLDQT). Serine 639 bears the Phosphoserine mark. The segment covering 649-667 (QKNQGDRSNYQDKSLSRNI) has biased composition (polar residues). Disordered stretches follow at residues 649-693 (QKNQ…KKSS), 715-778 (SLPG…SVKS), 791-981 (TGMQ…PPPE), 997-1535 (PRPA…GEGE), and 1566-1610 (EGGL…SEES). The segment covering 715–730 (SLPGKSGSSPSQSPCS) has biased composition (low complexity). Composition is skewed to polar residues over residues 740-760 (SRSQ…TPNV), 767-778 (TPSQSDTSSVKS), and 851-865 (SPSS…TPTA). Residues 895–928 (SLISSVSISSSSTSLSSSTSTEGSGTMKKLDPAV) show a composition bias toward low complexity. 2 stretches are compositionally biased toward pro residues: residues 929–946 (GSPP…PFPC) and 970–981 (PHSPVFPPPPPE). Residues 1001-1011 (LSPILPDSPVS) are compositionally biased toward low complexity. A compositionally biased stretch (pro residues) spans 1012–1031 (LPLPPPLLPSSEPPPAPPLD). Positions 1041–1053 (PFTNSGQPESSRG) are enriched in polar residues. Residue serine 1089 is modified to Phosphoserine. Residues 1122 to 1153 (SRNSTNEMESESQPASVTSSLPTPAKSSSQGD) show a composition bias toward polar residues. A Phosphoserine modification is found at serine 1167. Residues 1180-1193 (PSPSTTPLPDSSPS) are compositionally biased toward low complexity. Serine 1233 carries the post-translational modification Phosphoserine. Basic and acidic residues-rich tracts occupy residues 1240 to 1249 (GSVHSREAKE) and 1373 to 1383 (GRRDSDDDHSR). Phosphoserine is present on residues serine 1386 and serine 1388. Phosphothreonine is present on threonine 1392. Over residues 1405–1422 (QVGSIQRSIRKSSTSSDN) the composition is skewed to polar residues. Over residues 1447–1460 (KNTDPRFQRSRSEP) the composition is skewed to basic and acidic residues. Composition is skewed to low complexity over residues 1461–1474 (SPDA…CSPS) and 1504–1516 (SRTP…SRYS).

The protein belongs to the NHS family. Widely expressed. Expressed in adult and fetal brain, fetal eyes, adult lens, kidney, liver and intestine.

The chain is NHS-like protein 1 (NHSL1) from Homo sapiens (Human).